We begin with the raw amino-acid sequence, 437 residues long: Epsilon-sarcoglycan (437 aa).

Over 1 to 317 the chain is Extracellular; that stretch reads MQLPRWWELG…LKSRDYYTDF (317 aa). A glycan (N-linked (GlcNAc...) asparagine) is linked at N200. A helical membrane pass occupies residues 318-338; the sequence is LITLAVPSAVALVLFLILAYI. The Cytoplasmic portion of the chain corresponds to 339–437; it reads MCCRREGVEK…QQQTTGKWYP (99 aa).

It belongs to the sarcoglycan alpha/epsilon family. N-glycosylated. In terms of processing, ubiquitinated, leading to its degradation by the proteasome.

The protein localises to the cell membrane. It localises to the sarcolemma. It is found in the cytoplasm. The protein resides in the cytoskeleton. Its subcellular location is the cell projection. The protein localises to the dendrite. It localises to the golgi apparatus. Component of the sarcoglycan complex, a subcomplex of the dystrophin-glycoprotein complex which forms a link between the F-actin cytoskeleton and the extracellular matrix. This chain is Epsilon-sarcoglycan, found in Macaca fascicularis (Crab-eating macaque).